The primary structure comprises 191 residues: MSKARRWVIIVLSLAVLVMIGINMAEKDDTAQVVVNNNDPTYKSEHTDTLVYNPEGALSYRLIAQHVEYYSDQAVSWFTQPVLTTFDKDKIPTWSVKADKAKLTNDRMLYLYGHVEVNALVPDSQLRRITTDNAQINLVTQDVTSEDLVTLYGTTFNSSGLKMRGNLRSKNAELIEKVRTSYEIQNKQTQP.

Residues 7-25 (WVIIVLSLAVLVMIGINMA) traverse the membrane as a helical segment.

The protein belongs to the LptC family. Component of the lipopolysaccharide transport and assembly complex. Interacts with LptA and the LptBFG transporter complex.

It is found in the cell inner membrane. Functionally, involved in the assembly of lipopolysaccharide (LPS). Required for the translocation of LPS from the inner membrane to the outer membrane. Facilitates the transfer of LPS from the inner membrane to the periplasmic protein LptA. Could be a docking site for LptA. The sequence is that of Lipopolysaccharide export system protein LptC from Escherichia coli O157:H7.